The primary structure comprises 477 residues: Bifunctional protein HldE (477 aa).

Residues 1 to 318 form a ribokinase region; that stretch reads MKVTLPEFER…ENAVRGRAET (318 aa). ATP is bound at residue 195–198; that stretch reads NLSE. Aspartate 264 is an active-site residue. Positions 344–477 are cytidylyltransferase; sequence MTNGVFDILH…IKKIQKDSDK (134 aa).

In the N-terminal section; belongs to the carbohydrate kinase PfkB family. It in the C-terminal section; belongs to the cytidylyltransferase family. In terms of assembly, homodimer.

It carries out the reaction D-glycero-beta-D-manno-heptose 7-phosphate + ATP = D-glycero-beta-D-manno-heptose 1,7-bisphosphate + ADP + H(+). The enzyme catalyses D-glycero-beta-D-manno-heptose 1-phosphate + ATP + H(+) = ADP-D-glycero-beta-D-manno-heptose + diphosphate. It participates in nucleotide-sugar biosynthesis; ADP-L-glycero-beta-D-manno-heptose biosynthesis; ADP-L-glycero-beta-D-manno-heptose from D-glycero-beta-D-manno-heptose 7-phosphate: step 1/4. Its pathway is nucleotide-sugar biosynthesis; ADP-L-glycero-beta-D-manno-heptose biosynthesis; ADP-L-glycero-beta-D-manno-heptose from D-glycero-beta-D-manno-heptose 7-phosphate: step 3/4. Its function is as follows. Catalyzes the phosphorylation of D-glycero-D-manno-heptose 7-phosphate at the C-1 position to selectively form D-glycero-beta-D-manno-heptose-1,7-bisphosphate. Catalyzes the ADP transfer from ATP to D-glycero-beta-D-manno-heptose 1-phosphate, yielding ADP-D-glycero-beta-D-manno-heptose. The polypeptide is Bifunctional protein HldE (Klebsiella pneumoniae subsp. pneumoniae (strain ATCC 700721 / MGH 78578)).